Reading from the N-terminus, the 968-residue chain is RNA polymerase-associated protein RapA (968 aa).

A Helicase ATP-binding domain is found at 164–334; that stretch reads EVGQRHAPRV…FARLRLLDPD (171 aa). 177–184 contributes to the ATP binding site; it reads DEVGLGKT. Positions 280-283 match the DEAH box motif; the sequence is DEAH. The Helicase C-terminal domain maps to 490 to 664; sequence RVEWLLNYLI…ATPSEQEGLD (175 aa).

The protein belongs to the SNF2/RAD54 helicase family. RapA subfamily. In terms of assembly, interacts with the RNAP. Has a higher affinity for the core RNAP than for the holoenzyme. Its ATPase activity is stimulated by binding to RNAP.

In terms of biological role, transcription regulator that activates transcription by stimulating RNA polymerase (RNAP) recycling in case of stress conditions such as supercoiled DNA or high salt concentrations. Probably acts by releasing the RNAP, when it is trapped or immobilized on tightly supercoiled DNA. Does not activate transcription on linear DNA. Probably not involved in DNA repair. The polypeptide is RNA polymerase-associated protein RapA (Yersinia enterocolitica serotype O:8 / biotype 1B (strain NCTC 13174 / 8081)).